A 97-amino-acid polypeptide reads, in one-letter code: Meromycolate extension acyl carrier protein (97 aa).

A Carrier domain is found at A3–E81. S41 bears the O-(pantetheine 4'-phosphoryl)serine mark.

Belongs to the acyl carrier protein (ACP) family. Post-translationally, 4'-phosphopantetheine is transferred from CoA to a specific serine of apo-AcpM.

It localises to the cytoplasm. In terms of biological role, acyl carrier protein involved in meromycolate extension. The protein is Meromycolate extension acyl carrier protein (acpM) of Mycolicibacterium aurum (Mycobacterium aurum).